A 199-amino-acid polypeptide reads, in one-letter code: Recombination protein RecR (199 aa).

The segment at 56–71 (CAICGNVAEHEQCRIC) adopts a C4-type zinc-finger fold. In terms of domain architecture, Toprim spans 79 to 174 (TVLCVVEEPK…RVTRLASGLP (96 aa)).

It belongs to the RecR family.

May play a role in DNA repair. It seems to be involved in an RecBC-independent recombinational process of DNA repair. It may act with RecF and RecO. In Acidothermus cellulolyticus (strain ATCC 43068 / DSM 8971 / 11B), this protein is Recombination protein RecR.